Here is a 406-residue protein sequence, read N- to C-terminus: MTVSKKVEENIFASKLGPEYVGFDHITWYVGNAKQAASYYVTRMGFKQIAYRGPETGSRSVVSHVISNGQAIFVLTSPIRSMAGTGAYDDDPDVTKADRRLLEEIHNHLIKHGDGVKDVAFRIEGDIEAVWKRAVDHGAAPVAAPTTLKDDRHGSITLATIGTYEDTVHSLINRHDYSGPFLPGYEVVTDDDPINRLLPSIDFIEIDHCVGNQPWNGVDPIVKYYEDCLNFHRYWTVDDLNMCGEYSAMRSIVVASPNEVIKMPMNEPAQGKKKSQIEEFVNYYNGAGVQHIAFRTHDIVTAVTRLRERGVSFLEVPSAYYSDLRQRLSHTGLTLEEDIAVLEKLHILVDFDEKGYLLQIFSKHVLDRPTVFIEVIQRNNFDGFGAGNFKSLFEAFEREQARRGNL.

VOC domains are found at residues 22 to 174 and 205 to 363; these read GFDH…LINR and EIDH…IFSK. Positions 208, 291, and 374 each coordinate Fe cation.

The protein belongs to the 4HPPD family. Fe cation serves as cofactor.

It carries out the reaction 3-(4-hydroxyphenyl)pyruvate + O2 = homogentisate + CO2. It functions in the pathway amino-acid degradation; L-phenylalanine degradation; acetoacetate and fumarate from L-phenylalanine: step 3/6. The protein is Probable 4-hydroxyphenylpyruvate dioxygenase 2 of Aspergillus fumigatus (strain ATCC MYA-4609 / CBS 101355 / FGSC A1100 / Af293) (Neosartorya fumigata).